We begin with the raw amino-acid sequence, 232 residues long: Ubiquinone biosynthesis O-methyltransferase (232 aa).

S-adenosyl-L-methionine is bound by residues R36, G55, D76, and M120.

Belongs to the methyltransferase superfamily. UbiG/COQ3 family.

The enzyme catalyses a 3-demethylubiquinol + S-adenosyl-L-methionine = a ubiquinol + S-adenosyl-L-homocysteine + H(+). The catalysed reaction is a 3-(all-trans-polyprenyl)benzene-1,2-diol + S-adenosyl-L-methionine = a 2-methoxy-6-(all-trans-polyprenyl)phenol + S-adenosyl-L-homocysteine + H(+). Its pathway is cofactor biosynthesis; ubiquinone biosynthesis. Its function is as follows. O-methyltransferase that catalyzes the 2 O-methylation steps in the ubiquinone biosynthetic pathway. This is Ubiquinone biosynthesis O-methyltransferase from Burkholderia ambifaria (strain MC40-6).